A 221-amino-acid polypeptide reads, in one-letter code: 3-isopropylmalate dehydratase small subunit (221 aa).

This sequence belongs to the LeuD family. LeuD type 1 subfamily. In terms of assembly, heterodimer of LeuC and LeuD.

It carries out the reaction (2R,3S)-3-isopropylmalate = (2S)-2-isopropylmalate. It participates in amino-acid biosynthesis; L-leucine biosynthesis; L-leucine from 3-methyl-2-oxobutanoate: step 2/4. Catalyzes the isomerization between 2-isopropylmalate and 3-isopropylmalate, via the formation of 2-isopropylmaleate. The protein is 3-isopropylmalate dehydratase small subunit of Nitrosomonas europaea (strain ATCC 19718 / CIP 103999 / KCTC 2705 / NBRC 14298).